Consider the following 794-residue polypeptide: 6-hydroxypseudooxynicotine dehydrogenase complex subunit gamma (794 aa).

In terms of assembly, heterohexamer of 2 alpha (kdhA), 2 beta (kdhB) and 2 gamma (kdhC) subunit. Dimer of heterotrimers. Requires Mo-molybdopterin cytosine dinucleotide as cofactor.

The enzyme catalyses 6-hydroxypseudooxynicotine + A + H2O = 2,6-dihydroxypseudooxynicotine + AH2. It participates in alkaloid degradation; nicotine degradation. Functionally, molybdo-flavoprotein enzyme complex involved in nicotine degradation. The subunit gamma (large subunit) contains the substrate-binding sites, the subunit alpha (medium subunit) binds FAD and the subunit beta (small subunit) has a 2Fe-2S ferredoxin-type domain which binds 2 2Fe-2S clusters. This chain is 6-hydroxypseudooxynicotine dehydrogenase complex subunit gamma (kdhC), found in Paenarthrobacter nicotinovorans (Arthrobacter nicotinovorans).